Reading from the N-terminus, the 423-residue chain is MVFSNSDDGLINKKLPKELLLRIFSFLDIVTLCRCAQISKAWNILALDGSNWQRVDLFNFQTDVEGRVVENISKRCGGFLRKLSLRGCIGVGDSSLKTFAQNCRNIEHLNLNGCTKITDSTCYSLSRFCSKLKHLDLTSCVSVTNSSLKGISEGCRNLEYLNLSWCDQITKEGIEALVRGCRGLKALLLRGCTQLEDEALKHIQNHCHELVSLNLQSCSRITDDGVVQICRGCHRLQALCLSGCSNLTDASLTALGLNCPRLQVLEAARCSHLTDAGFTLLARNCHELEKMDLEECVLITDSTLVQLSIHCPKLQALSLSHCELITDEGILHLSSSTCGHERLRVLELDNCLLVTDASLEHLENCRGLERLELYDCQQVTRAGIKRMRAQLPHVKVHAYFAPVTPPPAVAGSGHRLCRCCVIL.

One can recognise an F-box domain in the interval 9-55 (GLINKKLPKELLLRIFSFLDIVTLCRCAQISKAWNILALDGSNWQRV). 13 LRR repeats span residues 61–87 (QTDVEGRVVENISKRCGGFLRKLSLRG), 88–113 (CIGVGDSSLKTFAQNCRNIEHLNLNG), 114–139 (CTKITDSTCYSLSRFCSKLKHLDLTS), 140–165 (CVSVTNSSLKGISEGCRNLEYLNLSW), 166–191 (CDQITKEGIEALVRGCRGLKALLLRG), 192–217 (CTQLEDEALKHIQNHCHELVSLNLQS), 218–243 (CSRITDDGVVQICRGCHRLQALCLSG), 244–269 (CSNLTDASLTALGLNCPRLQVLEAAR), 270–295 (CSHLTDAGFTLLARNCHELEKMDLEE), 296–321 (CVLITDSTLVQLSIHCPKLQALSLSH), 322–350 (CELITDEGILHLSSSTCGHERLRVLELDN), 351–375 (CLLVTDASLEHLENCRGLERLELYD), and 376–401 (CQQVTRAGIKRMRAQLPHVKVHAYFA). The interaction with Calmodulin stretch occupies residues 80 to 90 (LRKLSLRGCIG). Residue lysine 201 forms a Glycyl lysine isopeptide (Lys-Gly) (interchain with G-Cter in ubiquitin) linkage. At threonine 404 the chain carries Phosphothreonine; by GSK3-beta. Cysteine 420 carries S-geranylgeranyl cysteine lipidation. Residues 420–423 (CVIL) carry the CAAX motif motif.

Part of the SCF (SKP1-CUL1-F-box) E3 ubiquitin-protein ligase complex SCF(FBXL2) composed of CUL1, SKP1, RBX1 and FBXL2. Interacts with calmodulin; may antagonize substrate ubiquitination by SCF(FBXL2). May interact with PIK3R1. Interacts with PTPN13. Phosphorylated by GSK-beta (GSK3B), promoting recognition by FBXO3, leading to its ubiquitination by the SCF(FBXO3) complex. In terms of processing, ubiquitinated at Lys-201 by the SCF(FBXO3) complex in response to lipopolysaccharide (LPS), leading to its degradation by the proteasome.

It is found in the membrane. Its pathway is protein modification; protein ubiquitination. In terms of biological role, calcium-activated substrate recognition component of the SCF (SKP1-cullin-F-box protein) E3 ubiquitin-protein ligase complex, SCF(FBXL2), which mediates the ubiquitination and subsequent proteasomal degradation of target proteins. Unlike many F-box proteins, FBXL2 does not seem to target phosphodegron within its substrates but rather calmodulin-binding motifs and is thereby antagonized by calmodulin. This is the case for the cyclins CCND2 and CCND3 which polyubiquitination and subsequent degradation are inhibited by calmodulin. Through CCND2 and CCND3 degradation induces cell-cycle arrest in G(0). SCF(FBXL2) also mediates PIK3R2 ubiquitination and proteasomal degradation thereby regulating phosphatidylinositol 3-kinase signaling and autophagy. PCYT1A monoubiquitination by SCF(FBXL2) and subsequent degradation regulates synthesis of phosphatidylcholine, which is utilized for formation of membranes and of pulmonary surfactant. The SCF(FBXL2) complex acts as a regulator of inflammation by mediating ubiquitination and degradation of TRAF proteins (TRAF1, TRAF2, TRAF3, TRAF4, TRAF5 and TRAF6). The SCF(FBXL2) complex acts as a negative regulator of the NLRP3 inflammasome by mediating ubiquitination and degradation of NLRP3. This is F-box/LRR-repeat protein 2 from Mus musculus (Mouse).